A 305-amino-acid chain; its full sequence is Coiled-coil domain-containing protein 69 (305 aa).

Residue glycine 2 is the site of N-myristoyl glycine attachment. The segment at 13-41 is disordered; the sequence is LRKKKRQKAHQEGLTSKELNDLNAKSQEP. 2 coiled-coil regions span residues 42–167 and 216–278; these read NELL…SVLS and MERN…KEQN.

Belongs to the CCDC69 family.

Its subcellular location is the cytoplasm. It localises to the cytoskeleton. The protein resides in the spindle. It is found in the midbody. Its function is as follows. May act as a scaffold to regulate the recruitment and assembly of spindle midzone components. This Xenopus tropicalis (Western clawed frog) protein is Coiled-coil domain-containing protein 69 (ccdc69).